Here is a 415-residue protein sequence, read N- to C-terminus: Serine/threonine transporter SstT (415 aa).

A run of 8 helical transmembrane segments spans residues 15 to 35 (GSLV…AWLA), 45 to 65 (LGTL…WILV), 85 to 105 (ILYI…SFIF), 142 to 162 (ALLN…GIAL), 193 to 213 (VGIF…ALLG), 217 to 237 (LLVV…PLIV), 301 to 321 (GAAV…GIPV), and 331 to 351 (VVSA…LLLI).

It belongs to the dicarboxylate/amino acid:cation symporter (DAACS) (TC 2.A.23) family.

It is found in the cell inner membrane. The enzyme catalyses L-serine(in) + Na(+)(in) = L-serine(out) + Na(+)(out). It carries out the reaction L-threonine(in) + Na(+)(in) = L-threonine(out) + Na(+)(out). Involved in the import of serine and threonine into the cell, with the concomitant import of sodium (symport system). In Photorhabdus laumondii subsp. laumondii (strain DSM 15139 / CIP 105565 / TT01) (Photorhabdus luminescens subsp. laumondii), this protein is Serine/threonine transporter SstT.